The primary structure comprises 476 residues: Ribulose bisphosphate carboxylase large chain (476 aa).

Residues 1–2 constitute a propeptide that is removed on maturation; the sequence is MS. N-acetylproline is present on P3. An N6,N6,N6-trimethyllysine modification is found at K14. Positions 123 and 173 each coordinate substrate. Catalysis depends on K175, which acts as the Proton acceptor. K177 lines the substrate pocket. Mg(2+)-binding residues include K201, D203, and E204. An N6-carboxylysine modification is found at K201. H294 acts as the Proton acceptor in catalysis. Positions 295, 327, and 379 each coordinate substrate.

This sequence belongs to the RuBisCO large chain family. Type I subfamily. Heterohexadecamer of 8 large chains and 8 small chains; disulfide-linked. The disulfide link is formed within the large subunit homodimers. Mg(2+) serves as cofactor. Post-translationally, the disulfide bond which can form in the large chain dimeric partners within the hexadecamer appears to be associated with oxidative stress and protein turnover.

The protein resides in the plastid. It is found in the chloroplast. The catalysed reaction is 2 (2R)-3-phosphoglycerate + 2 H(+) = D-ribulose 1,5-bisphosphate + CO2 + H2O. It carries out the reaction D-ribulose 1,5-bisphosphate + O2 = 2-phosphoglycolate + (2R)-3-phosphoglycerate + 2 H(+). RuBisCO catalyzes two reactions: the carboxylation of D-ribulose 1,5-bisphosphate, the primary event in carbon dioxide fixation, as well as the oxidative fragmentation of the pentose substrate in the photorespiration process. Both reactions occur simultaneously and in competition at the same active site. This is Ribulose bisphosphate carboxylase large chain from Sorghum bicolor (Sorghum).